A 508-amino-acid chain; its full sequence is Cytochrome P450 monooxygenase lepD (508 aa).

The helical transmembrane segment at 22–42 threads the bilayer; it reads IAAAVAVVASIVIYLALSSFF. N53 and N416 each carry an N-linked (GlcNAc...) asparagine glycan. Residue C454 participates in heme binding.

The protein belongs to the cytochrome P450 family. The cofactor is heme.

It localises to the membrane. Cytochrome P450 monooxygenase; part of the gene cluster 23 that mediates the biosynthesis of a family of 2-pyridones known as leporins. The hybrid PKS-NRPS synthetase lepA and the enoyl reductase lepG are responsible for fusion of phenylalanine with a hexaketide and subsequent release of the stable tetramic acid precursor, pre-leporin C. Because lepA lacks a designated enoylreductase (ER) domain, the required activity is provided the enoyl reductase lepG. It is possible that the dehydrogenase lepF also participates in production of pre-leporin C. Cytochrome P450 monooxygenase lepH is then required for the ring expansion step to yield leporin C. Leporin C is then presumably further oxidized by the N-hydroxylase lepD to form leporin B. LepI may possess a function in biosynthesis upstream of lepA. Leporin B is further oxidized in the presence of ferric ion to give the leporin B trimer-iron chelate, but whether or not this reaction is catalyzed by an enzyme in the pathway or by ferric ion is not determined yet. The chain is Cytochrome P450 monooxygenase lepD from Aspergillus flavus (strain ATCC 200026 / FGSC A1120 / IAM 13836 / NRRL 3357 / JCM 12722 / SRRC 167).